A 346-amino-acid chain; its full sequence is MAGFFYLGGRDNNSNNNKQDHHQVDKDHHHQDKSNYLYLYKDEIYNNNKGFEIWPPQYFQQQEHQQQQQQQQHASAPANFYSFGMVPSGSSSNNNNNRSRSLYFNVVSDHEPGGFTVTRQGGMNCQDCGNQAKKDCPHMRCRTCCKSRGFHCQTHVKSTWVPAAKRRERLAQLASLQHHSASSRETQNAKRLREASGGDNNDDKDHSGGGGSALANTRVVNANSNSGLEVSQHLPPEVNSPAIFRCVRVSSIEEDEDDQAYAYQTAVNIGGHIFKGILYDQGPEHQDNHHLNLLASTATTTNVEETATKTVTGNNNNGLMLDPSSLYPAQLNSFIAGTPFFTPPRS.

Residues 7–31 form a disordered region; sequence LGGRDNNSNNNKQDHHQVDKDHHHQ. The span at 18 to 31 shows a compositional bias: basic and acidic residues; sequence KQDHHQVDKDHHHQ. Zn(2+) is bound by residues Cys125, Cys128, Cys136, Cys141, Cys145, and Cys152. Positions 125 to 152 form a DNA-binding region, zn(2)-C6 fungal-type; degenerate; the sequence is CQDCGNQAKKDCPHMRCRTCCKSRGFHC. Positions 175-186 are enriched in polar residues; the sequence is SLQHHSASSRET. Positions 175–215 are disordered; it reads SLQHHSASSRETQNAKRLREASGGDNNDDKDHSGGGGSALA. Residues 187–207 show a composition bias toward basic and acidic residues; it reads QNAKRLREASGGDNNDDKDHS. The Required for homo- and heterodimerization signature appears at 269 to 272; that stretch reads IGGH.

The protein belongs to the SHI protein family.

Its subcellular location is the nucleus. In terms of biological role, transcription activator that binds DNA on 5'-ACTCTAC-3' and promotes auxin homeostasis-regulating gene expression (e.g. YUC genes), as well as genes affecting stamen development, cell expansion and timing of flowering. Synergistically with other SHI-related proteins, regulates gynoecium, stamen and leaf development in a dose-dependent manner, controlling apical-basal patterning. Promotes style and stigma formation, and influences vascular development during gynoecium development. May also have a role in the formation and/or maintenance of the shoot apical meristem (SAM). This chain is Protein SHI RELATED SEQUENCE 5 (SRS5), found in Arabidopsis thaliana (Mouse-ear cress).